The primary structure comprises 1059 residues: Ubiquitin carboxyl-terminal hydrolase 36 (1059 aa).

Disordered stretches follow at residues 24–49 and 94–148; these read VGNGSRAADEAKKTGGGGGDDSDSEM and SNNN…KPKR. Over residues 94 to 123 the composition is skewed to low complexity; the sequence is SNNNNSSSCNGSNFGNSKVVGANGHDNGNN. A compositionally biased stretch (polar residues) spans 130–139; the sequence is QSESTQSGPS. The 309-residue stretch at 171-479 folds into the USP domain; the sequence is TGMINVGNTC…NAYIMFYELD (309 aa). Cysteine 180 serves as the catalytic Nucleophile. The active-site Proton acceptor is histidine 438. The segment at 505 to 673 is disordered; the sequence is TVSSSSPTHT…KTPLKSSVKT (169 aa). Serine 508 and serine 510 each carry phosphoserine. A compositionally biased stretch (polar residues) spans 528–539; that stretch reads GYSNGHATGSSN. Low complexity-rich tracts occupy residues 540–560, 592–611, and 633–647; these read AQKTAIQFKQQQQHPQQNGLQ, NGNKSSSSSASNSNHNKSVN, and ATATATATATARPTA. Over residues 655-664 the composition is skewed to basic and acidic residues; it reads MTEDSSDKPK. Phosphothreonine is present on residues threonine 673 and threonine 682. Disordered regions lie at residues 687-893, 926-998, and 1012-1059; these read LVPY…EAST, KELV…RYHN, and KYNR…QSSS. A phosphoserine mark is found at serine 692 and serine 694. Composition is skewed to low complexity over residues 729 to 739 and 752 to 765; these read TKTNGGSLTNG and SSSSSLASASASAA. A Phosphoserine modification is found at serine 766. Residues 766-776 are compositionally biased toward acidic residues; that stretch reads SDDEDADEEEE. A compositionally biased stretch (polar residues) spans 779–795; it reads KLTNGWQPQKQSQSLTQ. The span at 799–808 shows a compositional bias: pro residues; the sequence is PPSPKTPPSP. Serine 801 is modified (phosphoserine). The residue at position 804 (threonine 804) is a Phosphothreonine. At serine 807 the chain carries Phosphoserine. The segment covering 825–839 has biased composition (acidic residues); that stretch reads DNEDEDDDDDEDEEE. Composition is skewed to polar residues over residues 842–862 and 876–893; these read QVVSTPSKNPRNPFAKSSTTP and KSQQQPRVGNGYQSEAST. Residues threonine 846 and threonine 861 each carry the phosphothreonine modification. Residues 926–940 are compositionally biased toward basic and acidic residues; the sequence is KELVAEAREQRQHDH. Positions 1048-1059 are enriched in low complexity; sequence QQQQQQSQQSSS.

Belongs to the peptidase C19 family. Interacts with atms/PAF1, but not with CycT.

The protein localises to the nucleus. Its subcellular location is the nucleolus. It catalyses the reaction Thiol-dependent hydrolysis of ester, thioester, amide, peptide and isopeptide bonds formed by the C-terminal Gly of ubiquitin (a 76-residue protein attached to proteins as an intracellular targeting signal).. In terms of biological role, required for maintaining multiple types of adult stem cells, including male and female germline, epithelial follicle cell and intestinal stem cells. May function as a transcriptional repressor by continually deubiquiting histone H2B at the promoters of genes critical for cellular differentiation, thereby preventing histone H3 'Lys-4' trimethylation (H3K4). Controls selective autophagy activation by ubiquitinated proteins. In Drosophila pseudoobscura pseudoobscura (Fruit fly), this protein is Ubiquitin carboxyl-terminal hydrolase 36 (Usp36).